A 380-amino-acid chain; its full sequence is Erythronate-4-phosphate dehydrogenase (380 aa).

Residues Ser-45 and Thr-66 each coordinate substrate. NAD(+) contacts are provided by residues Asp-146, Thr-174, 205–207 (ASR), and Asp-231. Arg-207 is an active-site residue. Glu-236 is an active-site residue. The Proton donor role is filled by His-253. Residue Gly-256 coordinates NAD(+). Tyr-257 serves as a coordination point for substrate.

Belongs to the D-isomer specific 2-hydroxyacid dehydrogenase family. PdxB subfamily. Homodimer.

The protein resides in the cytoplasm. The enzyme catalyses 4-phospho-D-erythronate + NAD(+) = (R)-3-hydroxy-2-oxo-4-phosphooxybutanoate + NADH + H(+). It functions in the pathway cofactor biosynthesis; pyridoxine 5'-phosphate biosynthesis; pyridoxine 5'-phosphate from D-erythrose 4-phosphate: step 2/5. Catalyzes the oxidation of erythronate-4-phosphate to 3-hydroxy-2-oxo-4-phosphonooxybutanoate. The chain is Erythronate-4-phosphate dehydrogenase from Pseudomonas putida (strain GB-1).